The following is a 290-amino-acid chain: Type II secretion system protein C (290 aa).

Residues 1–28 are Cytoplasmic-facing; it reads MTLPFRDDLLSSLLARCKTVPLSRFSQP. Residues 29-46 traverse the membrane as a helical segment; that stretch reads LFWLLLLLLAHQCAGLTW. Residues 47-290 are Periplasmic-facing; it reads RLLDLGSQQS…LYDVYVGLSE (244 aa).

Belongs to the GSP C family.

The protein localises to the cell inner membrane. Functionally, involved in a type II secretion system (T2SS, formerly general secretion pathway, GSP) for the export of proteins. In Aeromonas salmonicida, this protein is Type II secretion system protein C (exeC).